A 971-amino-acid chain; its full sequence is Isoleucine--tRNA ligase (971 aa).

The 'HIGH' region signature appears at Pro-64 to His-74. Glu-602 contributes to the L-isoleucyl-5'-AMP binding site. Positions Lys-643 to Ser-647 match the 'KMSKS' region motif. Lys-646 contacts ATP.

The protein belongs to the class-I aminoacyl-tRNA synthetase family. IleS type 1 subfamily. Monomer.

The protein localises to the cytoplasm. It catalyses the reaction tRNA(Ile) + L-isoleucine + ATP = L-isoleucyl-tRNA(Ile) + AMP + diphosphate. Its function is as follows. Catalyzes the attachment of isoleucine to tRNA(Ile). As IleRS can inadvertently accommodate and process structurally similar amino acids such as valine, to avoid such errors it has two additional distinct tRNA(Ile)-dependent editing activities. One activity is designated as 'pretransfer' editing and involves the hydrolysis of activated Val-AMP. The other activity is designated 'posttransfer' editing and involves deacylation of mischarged Val-tRNA(Ile). This chain is Isoleucine--tRNA ligase, found in Bartonella quintana (strain Toulouse) (Rochalimaea quintana).